A 339-amino-acid polypeptide reads, in one-letter code: MKDSLVLLGRVPAHPDSRCWFLAWNPAGTLLASCGGDRRIRIWGTEGDSWICKSVLSEGHQRTVRKVAWSPCGNYLASASFDATTCIWKKNQDDFECVTTLEGHENEVKSVAWAPSGNLLATCSRDKSVWVWEVDEEDEYECVSVLNSHTQDVKHVVWHPSQELLASASYDDTVKLYREEEDDWVCCATLEGHESTVWSLAFDPSGQRLASCSDDRTVRIWRQYLPGNEQGVACSGSDPSWKCICTLSGFHSRTIYDIAWCQLTGALATACGDDAIRVFQEDPNSDPQQPTFSLTAHLHQAHSQDVNCVAWNPKEPGLLASCSDDGEVAFWKYQRPEGL.

7 WD repeats span residues H14–K53, G59–V98, G103–C142, S148–C187, G192–G231, F250–Q289, and A301–L339. The LYR motif; required for interaction with HSC20 signature appears at L176–R178.

Belongs to the WD repeat CIA1 family. Component of the CIA complex. Interacts with CIAO2A and forms a complex with CIAO2B and MMS19; the interactions with CIAO2A and CIAO2B are mutually exclusive. Interacts with CHD1L, ERCC2, IREB2 and POLD1. Component of the MMXD complex, which includes CIAO1, ERCC2, CIAO2B, MMS19 and SLC25A5. Interacts with WT1. Interacts with CIAO3. Interacts (via LYR motif) with HSC20.

The protein localises to the cytoplasm. Its function is as follows. Key component of the cytosolic iron-sulfur protein assembly (CIA) complex, a multiprotein complex that mediates the incorporation of iron-sulfur cluster into extramitochondrial Fe/S proteins. As a CIA complex component, interacts specifically with CIAO2A or CIAO2B and MMS19 to assist different branches of iron-sulfur protein assembly, depending of its interactors. The complex CIAO1:CIAO2B:MMS19 binds to and facilitates the assembly of most cytosolic-nuclear Fe/S proteins. CIAO1:CIAO2A specifically matures ACO1 and stabilizes IREB2. Seems to specifically modulate the transactivation activity of WT1. As part of the mitotic spindle-associated MMXD complex it may play a role in chromosome segregation. The sequence is that of Probable cytosolic iron-sulfur protein assembly protein CIAO1 from Homo sapiens (Human).